Reading from the N-terminus, the 121-residue chain is uncharacterized protein (121 aa).

2 helical membrane passes run 26-46 and 72-92; these read FIALFDFPLLFIYFPFLILVL and AFLTHEECGLVLQYIYYWLGL.

Its subcellular location is the membrane. This is an uncharacterized protein from Saccharomyces cerevisiae (strain ATCC 204508 / S288c) (Baker's yeast).